The primary structure comprises 135 residues: uncharacterized protein (135 aa).

The tract at residues 1–70 (MKPDWPRRGA…RWRPQGTGTG (70 aa)) is disordered.

This is an uncharacterized protein from Homo sapiens (Human).